The following is a 313-amino-acid chain: Non-functional target of rapamycin complex subunit LST8-2 (313 aa).

WD repeat units follow at residues 1–35, 38–76, 82–121, 123–162, 166–205, 215–255, and 258–297; these read MFENKPDDSPVYLATASHDQTIRLWQARTGRCYFS, YPDLHVNRLELTPEKGKLVAACNPHIRLFDLRSYNPHIP, SHTKNVMAVGFQYTGHMMYSGSEDGSVKIWDLRVRECQRE, RSVSPVNTVVLHPNQTELISGDQNGNIRVWDLRADLCSCE, EVGTPIRSLTVMWDGTMVVAANDRGTCYVWRSLCERQTMT, AHNS…LEKV, and GHERWVWDCDFSMDGEYLVTASSDTTARLWSMRAGKEEMV.

Belongs to the WD repeat LST8 family.

Its function is as follows. Probable non-functional protein. This Arabidopsis thaliana (Mouse-ear cress) protein is Non-functional target of rapamycin complex subunit LST8-2.